Here is a 285-residue protein sequence, read N- to C-terminus: UPF0354 protein SACOL1793 (285 aa).

It belongs to the UPF0354 family.

The sequence is that of UPF0354 protein SACOL1793 from Staphylococcus aureus (strain COL).